The primary structure comprises 250 residues: Precorrin-4 C(11)-methyltransferase (250 aa).

This sequence belongs to the precorrin methyltransferase family.

The enzyme catalyses precorrin-4 + S-adenosyl-L-methionine = precorrin-5 + S-adenosyl-L-homocysteine. It functions in the pathway cofactor biosynthesis; adenosylcobalamin biosynthesis; cob(II)yrinate a,c-diamide from precorrin-2 (aerobic route): step 4/10. Functionally, catalyzes the methylation of C-11 in precorrin-4 to form precorrin-5. The polypeptide is Precorrin-4 C(11)-methyltransferase (cobM) (Pseudomonas aeruginosa (strain ATCC 15692 / DSM 22644 / CIP 104116 / JCM 14847 / LMG 12228 / 1C / PRS 101 / PAO1)).